The chain runs to 166 residues: CDP-archaeol synthase (166 aa).

The next 5 membrane-spanning stretches (helical) occupy residues 1–21 (MPII…LVAN), 55–75 (LLVA…FLGI), 78–98 (IYVS…GAFI), 110–130 (AIGL…IISK), and 131–151 (ISLN…LHIL).

The protein belongs to the CDP-archaeol synthase family. Requires Mg(2+) as cofactor.

It is found in the cell membrane. The catalysed reaction is 2,3-bis-O-(geranylgeranyl)-sn-glycerol 1-phosphate + CTP + H(+) = CDP-2,3-bis-O-(geranylgeranyl)-sn-glycerol + diphosphate. It participates in membrane lipid metabolism; glycerophospholipid metabolism. Functionally, catalyzes the formation of CDP-2,3-bis-(O-geranylgeranyl)-sn-glycerol (CDP-archaeol) from 2,3-bis-(O-geranylgeranyl)-sn-glycerol 1-phosphate (DGGGP) and CTP. This reaction is the third ether-bond-formation step in the biosynthesis of archaeal membrane lipids. In Sulfurisphaera tokodaii (strain DSM 16993 / JCM 10545 / NBRC 100140 / 7) (Sulfolobus tokodaii), this protein is CDP-archaeol synthase.